The chain runs to 1829 residues: Iron-regulated protein FrpC (1829 aa).

Hemolysin-type calcium-binding repeat units follow at residues 869 to 886, 887 to 904, 1015 to 1032, 1033 to 1050, 1051 to 1068, 1069 to 1086, 1087 to 1104, 1215 to 1232, 1233 to 1250, 1251 to 1268, 1269 to 1286, 1287 to 1304, 1415 to 1432, 1433 to 1450, 1451 to 1468, 1469 to 1486, 1487 to 1504, 1615 to 1632, 1633 to 1650, 1651 to 1668, 1669 to 1686, and 1687 to 1704; these read FGHN…NDTL, IGGA…SDTY, NGGL…DDLL, NGDA…NDTL, NGGE…NDAL, NGGE…NDTL, DGGE…NDAL, and NGGE…NDVL.

It belongs to the RTX prokaryotic toxin (TC 1.C.11) family.

The protein localises to the cell outer membrane. It localises to the secreted. In terms of biological role, may participate in the pathogenesis of meningococcal disease. The protein is Iron-regulated protein FrpC (frpC) of Neisseria meningitidis serogroup C.